Reading from the N-terminus, the 269-residue chain is Phosphate import ATP-binding protein PstB 2 (269 aa).

An ABC transporter domain is found at 22-264 (LSTNDLRVFY…PSLQSTEDYV (243 aa)). 55-62 (GPSGSGKS) lines the ATP pocket.

It belongs to the ABC transporter superfamily. Phosphate importer (TC 3.A.1.7) family. In terms of assembly, the complex is composed of two ATP-binding proteins (PstB), two transmembrane proteins (PstC and PstA) and a solute-binding protein (PstS).

Its subcellular location is the cell membrane. The catalysed reaction is phosphate(out) + ATP + H2O = ADP + 2 phosphate(in) + H(+). Functionally, part of the ABC transporter complex PstSACB involved in phosphate import. Responsible for energy coupling to the transport system. The protein is Phosphate import ATP-binding protein PstB 2 of Lactococcus lactis subsp. lactis (strain IL1403) (Streptococcus lactis).